The primary structure comprises 62 residues: DNA-directed RNA polymerase subunit Rpo10 (62 aa).

Zn(2+)-binding residues include cysteine 6, cysteine 9, cysteine 43, and cysteine 44.

This sequence belongs to the archaeal Rpo10/eukaryotic RPB10 RNA polymerase subunit family. In terms of assembly, part of the RNA polymerase complex. Zn(2+) serves as cofactor.

It is found in the cytoplasm. It catalyses the reaction RNA(n) + a ribonucleoside 5'-triphosphate = RNA(n+1) + diphosphate. Its function is as follows. DNA-dependent RNA polymerase (RNAP) catalyzes the transcription of DNA into RNA using the four ribonucleoside triphosphates as substrates. The polypeptide is DNA-directed RNA polymerase subunit Rpo10 (Methanocorpusculum labreanum (strain ATCC 43576 / DSM 4855 / Z)).